An 82-amino-acid chain; its full sequence is Colonization factor (82 aa).

The N-terminal stretch at Met1–Ala33 is a signal peptide.

The protein localises to the secreted. The protein is Colonization factor (cep) of Vibrio cholerae serotype O1 (strain ATCC 39315 / El Tor Inaba N16961).